A 557-amino-acid polypeptide reads, in one-letter code: IgE-binding protein (557 aa).

Residues 113–172 (DGLGKPALSSSEAGEESSSEETDWEEEAAHYQPANWSRKKPKAAGEGQFADWPQGSRLQG) form a disordered region. Acidic residues predominate over residues 125 to 138 (AGEESSSEETDWEE). The Integrase catalytic domain occupies 344 to 534 (TAIRPGRRSR…TAAERHVQSQ (191 aa)).

In Mus musculus (Mouse), this protein is IgE-binding protein (Iap).